A 631-amino-acid polypeptide reads, in one-letter code: Glutathione S-transferase C-terminal domain-containing protein (631 aa).

One can recognise a GST C-terminal domain in the interval 128-330; that stretch reads LGFKKTCLKA…QEVPRVQTAA (203 aa). Disordered regions lie at residues 188–233 and 345–373; these read HNDD…SSSA and TTSS…GGPR. Over residues 211 to 224 the composition is skewed to basic and acidic residues; the sequence is AKEKTKSKGHRQET. Ser231 carries the post-translational modification Phosphoserine.

It belongs to the GSTCD family.

Its subcellular location is the cytoplasm. This chain is Glutathione S-transferase C-terminal domain-containing protein (GSTCD), found in Bos taurus (Bovine).